The primary structure comprises 368 residues: Galactoside 2-alpha-L-fucosyltransferase Sec1 (368 aa).

Residues 1–20 lie on the Cytoplasmic side of the membrane; that stretch reads MPSDSCLLSLTVLQRLRAIC. Residues 21–41 form a helical; Signal-anchor for type II membrane protein membrane-spanning segment; that stretch reads PPLSTFYLFFVIFVVSTIFHC. The Lumenal portion of the chain corresponds to 42–368; it reads HRRLGLVPAP…APKRHWGALL (327 aa). Residues Asn195, Asn289, and Asn315 are each glycosylated (N-linked (GlcNAc...) asparagine).

The protein belongs to the glycosyltransferase 11 family.

Its subcellular location is the golgi apparatus. The protein localises to the golgi stack membrane. The enzyme catalyses a ganglioside GM1 + GDP-beta-L-fucose = a ganglioside Fuc-GM1 + GDP + H(+). The protein operates within protein modification; protein glycosylation. Functionally, catalyzes the transfer of alpha 1,2-linked fucose to ganglioside GM1 and galacto-N-biose. The protein is Galactoside 2-alpha-L-fucosyltransferase Sec1 of Mus musculus (Mouse).